The chain runs to 72 residues: Translation initiation factor IF-1 (72 aa).

One can recognise an S1-like domain in the interval M1–K72.

Belongs to the IF-1 family. As to quaternary structure, component of the 30S ribosomal translation pre-initiation complex which assembles on the 30S ribosome in the order IF-2 and IF-3, IF-1 and N-formylmethionyl-tRNA(fMet); mRNA recruitment can occur at any time during PIC assembly.

The protein resides in the cytoplasm. In terms of biological role, one of the essential components for the initiation of protein synthesis. Stabilizes the binding of IF-2 and IF-3 on the 30S subunit to which N-formylmethionyl-tRNA(fMet) subsequently binds. Helps modulate mRNA selection, yielding the 30S pre-initiation complex (PIC). Upon addition of the 50S ribosomal subunit IF-1, IF-2 and IF-3 are released leaving the mature 70S translation initiation complex. The polypeptide is Translation initiation factor IF-1 (Xylella fastidiosa (strain Temecula1 / ATCC 700964)).